Here is a 57-residue protein sequence, read N- to C-terminus: LVLFLGLVSLSICEEEKRETEEEENDQEEDDKSEEKRFLSLLPSIVSGAVSLAKKLG.

An N-terminal signal peptide occupies residues 1 to 13; it reads LVLFLGLVSLSIC. Residues 14–35 constitute a propeptide that is removed on maturation; that stretch reads EEEKRETEEEENDQEEDDKSEE. The interval 16–35 is disordered; that stretch reads EKRETEEEENDQEEDDKSEE. Over residues 21–32 the composition is skewed to acidic residues; sequence EEEENDQEEDDK. Leu-56 bears the Leucine amide mark.

Expressed by the skin glands.

It localises to the secreted. Functionally, has antibacterial activity against the Gram-positive bacterium M.luteus ATCC 49732 (MIC=1.3 uM). Does not inhibit the growth of the fungus C.albicans. The sequence is that of Phylloseptin-Az4 (psn12) from Pithecopus azureus (Orange-legged monkey tree frog).